The primary structure comprises 555 residues: Cytochrome P450 monooxygenase abl2 (555 aa).

2 consecutive transmembrane segments (helical) span residues 38 to 58 (SFDL…ALFI) and 141 to 161 (VFIG…APLA). N-linked (GlcNAc...) asparagine glycans are attached at residues Asn325 and Asn360. Cys489 contributes to the heme binding site.

The protein belongs to the cytochrome P450 family. Requires heme as cofactor.

It is found in the membrane. It functions in the pathway hormone biosynthesis. Its function is as follows. Cytochrome P450 monooxygenase; part of the gene cluster that mediates the biosynthesis of abscisic acid (ABA), a phytohormone that acts antagonistically toward salicylic acid (SA), jasmonic acid (JA) and ethylene (ETH) signaling, to impede plant defense responses. The first step of the pathway catalyzes the reaction from farnesyl diphosphate to alpha-ionylideneethane performed by the alpha-ionylideneethane synthase abl3 via a three-step reaction mechanism involving 2 neutral intermediates, beta-farnesene and allofarnesene. The cytochrome P450 monooxygenase abl1 might then be involved in the conversion of alpha-ionylideneethane to alpha-ionylideneacetic acid. Alpha-ionylideneacetic acid is further converted to abscisic acid in 2 steps involving the cytochrome P450 monooxygenase abl2 and the short-chain dehydrogenase/reductase abl4, via the intermediates 1'-deoxy-ABA or 1',4'-trans-diol-ABA, depending on the order of action of these 2 enzymes. Abl2 is responsible for the hydroxylation of carbon atom C-1' and abl4 might be involved in the oxidation of the C-4' carbon atom. The protein is Cytochrome P450 monooxygenase abl2 of Leptosphaeria maculans (strain JN3 / isolate v23.1.3 / race Av1-4-5-6-7-8) (Blackleg fungus).